A 713-amino-acid chain; its full sequence is Phosphoribosylformylglycinamidine synthase subunit PurL (713 aa).

His32 is a catalytic residue. Tyr35 serves as a coordination point for ATP. Glu76 provides a ligand contact to Mg(2+). Residues Ser77–His80 and Arg99 each bind substrate. His78 functions as the Proton acceptor in the catalytic mechanism. Asp100 contributes to the Mg(2+) binding site. Gln224 provides a ligand contact to substrate. Residue Asp252 participates in Mg(2+) binding. Glu296 to Gln298 lines the substrate pocket. Residues Asp471 and Gly508 each coordinate ATP. Asn509 is a binding site for Mg(2+). Ser511 serves as a coordination point for substrate.

It belongs to the FGAMS family. In terms of assembly, monomer. Part of the FGAM synthase complex composed of 1 PurL, 1 PurQ and 2 PurS subunits.

It localises to the cytoplasm. It catalyses the reaction N(2)-formyl-N(1)-(5-phospho-beta-D-ribosyl)glycinamide + L-glutamine + ATP + H2O = 2-formamido-N(1)-(5-O-phospho-beta-D-ribosyl)acetamidine + L-glutamate + ADP + phosphate + H(+). It participates in purine metabolism; IMP biosynthesis via de novo pathway; 5-amino-1-(5-phospho-D-ribosyl)imidazole from N(2)-formyl-N(1)-(5-phospho-D-ribosyl)glycinamide: step 1/2. Its function is as follows. Part of the phosphoribosylformylglycinamidine synthase complex involved in the purines biosynthetic pathway. Catalyzes the ATP-dependent conversion of formylglycinamide ribonucleotide (FGAR) and glutamine to yield formylglycinamidine ribonucleotide (FGAM) and glutamate. The FGAM synthase complex is composed of three subunits. PurQ produces an ammonia molecule by converting glutamine to glutamate. PurL transfers the ammonia molecule to FGAR to form FGAM in an ATP-dependent manner. PurS interacts with PurQ and PurL and is thought to assist in the transfer of the ammonia molecule from PurQ to PurL. This is Phosphoribosylformylglycinamidine synthase subunit PurL from Thermococcus sibiricus (strain DSM 12597 / MM 739).